The sequence spans 655 residues: Katanin p80 WD40 repeat-containing subunit B1 (655 aa).

WD repeat units lie at residues 18-58 (AHGS…CIMS), 61-100 (GHTTPVESVRFNNAEELIVAGSQSGSLRVWDLEAAKILRT), 103-142 (GHKANVCSLDFHPYGDFVASGSLDTNIKLWDVRRKGCVFR), 145-184 (GHTQAVRCLRFSPDGKWLASASDDHSVKLWDLTAGKMMAE), 187-226 (EHKGPVNIIEFHPNEYLLASGSADRTVRFWDLEKFQLIGC), and 229-269 (GETI…DTVP). The disordered stretch occupies residues 316-453 (VPAEMPISQP…PVPAPQSKPP (138 aa)). Basic and acidic residues predominate over residues 358 to 374 (KESRAEIQNPEDYKEIF). Residues 415-426 (PATSNKNNTEQL) are compositionally biased toward polar residues.

This sequence belongs to the WD repeat KATNB1 family. Interacts with katna1. This interaction enhances the microtubule binding and severing activity of katna1 and also targets this activity to the centrosome.

Its subcellular location is the cytoplasm. The protein localises to the cytoskeleton. The protein resides in the microtubule organizing center. It is found in the centrosome. It localises to the spindle pole. Its subcellular location is the spindle. Participates in a complex which severs microtubules in an ATP-dependent manner. May act to target the enzymatic subunit of this complex to sites of action such as the centrosome. Microtubule severing may promote rapid reorganization of cellular microtubule arrays and the release of microtubules from the centrosome following nucleation. In Xenopus tropicalis (Western clawed frog), this protein is Katanin p80 WD40 repeat-containing subunit B1 (katnb1).